The following is a 98-amino-acid chain: Flagellar hook-basal body complex protein FliE (98 aa).

Low complexity predominate over residues 1–23; the sequence is MNNINDLRLNNNISNTNKSQNST. The disordered stretch occupies residues 1–24; that stretch reads MNNINDLRLNNNISNTNKSQNSTG.

It belongs to the FliE family.

The protein localises to the bacterial flagellum basal body. In Campylobacter jejuni subsp. jejuni serotype O:2 (strain ATCC 700819 / NCTC 11168), this protein is Flagellar hook-basal body complex protein FliE.